Here is a 597-residue protein sequence, read N- to C-terminus: MPDVPALMLSLSNTLDAQLRAAMQRAFPVADAVLDPQLAPASKPEFGDFQANGALPLAKPLKQAPRQIATAIVEQLQADSGFTDLCLEPQIAGPGFINLTIRPERLAAEVSARLGDERLGVPAVEQAAPVVVDFSSPNIAKEMHVGHLRSTIIGDSLARVLEFRGHTVLRLNHVGDWGTQFGMLITHLKQVAPDALETADAVDLGDLVAFYREAKKRFDDDEAFQSTSREEVVKLQGGDPVSLKAWGLLCDQSRREFQKIYDRLDIRLNERGESFYNPFLPAVIDGLKAAELLVTDDGAQCVFLEGVQGKDGKPLPVIVQKSDGGFNYATTDLAAIRYRFGAAPDGDGARRVVYVTDAGQANHFAGVFQVAERAGWIPDGARLEHVPFGLVQGEDGKKLKTRAGDTVRLRDLLDEAVERAETDLRSRLKEEERSESEEFIQNVAGTVGLAAVKYADLSQNRITNYQFSFDRMLALQGNTAPYLLYAVVRIAGIARKGGDLEVSTGQLQFSEPQEWALVRELLKFDSVIAEVEEELLPNRLCSYLFELSQVFNRFYDQVPVLKADPEALASRLALCRLTADTLRLGLGLLGIATLDRM.

Residues 137-147 (PNIAKEMHVGH) carry the 'HIGH' region motif.

Belongs to the class-I aminoacyl-tRNA synthetase family. As to quaternary structure, monomer.

It is found in the cytoplasm. It catalyses the reaction tRNA(Arg) + L-arginine + ATP = L-arginyl-tRNA(Arg) + AMP + diphosphate. The sequence is that of Arginine--tRNA ligase from Parasynechococcus marenigrum (strain WH8102).